The chain runs to 4588 residues: Protocadherin Fat 1 (4588 aa).

An N-terminal signal peptide occupies residues 1–21 (MGRHLALLLLLLLLFQHFGDS). The Extracellular segment spans residues 22–4181 (DGSQRLEQTP…STPWNIGLAE (4160 aa)). Cadherin domains follow at residues 35 to 149 (THLE…RPLF) and 150 to 257 (SPTS…APVI). N-linked (GlcNAc...) asparagine glycosylation is present at N40. N333 is a glycosylation site (N-linked (GlcNAc...) asparagine). Cadherin domains are found at residues 368–463 (EKDV…PPEF), 464–569 (TQTA…TPLF), 570–673 (EKIN…VNLQ), 718–822 (STLP…PPEF), 823–927 (LQES…PPTF), 928–1034 (IPPN…PPVF), 1035–1139 (SSFV…APQT), 1140–1245 (SEPV…KPQF), 1246–1357 (LQKF…EPIS), 1359–1456 (EESF…RPQF), 1457–1562 (STSK…APWF), 1563–1667 (TASS…SPKF), 1668–1765 (TSKE…APVF), 1766–1879 (MQAE…PPVF), 1880–1979 (AKPL…HLKF), 1980–2081 (TQDV…APVF), 2082–2182 (VNLP…MPVF), 2183–2283 (EKPF…PPVF), 2284–2390 (AQQS…PPLF), 2391–2492 (EQQI…SPAF), 2493–2596 (LQNE…APQF), 2597–2703 (RATK…LPKF), 2704–2809 (SEPF…SPVF), 2810–2918 (ESSP…PPRF), 2919–3023 (TAEI…SPVC), 3024–3125 (EKTL…APEF), 3126–3230 (SADP…PPVF), 3231–3335 (EYRE…TPVF), 3336–3440 (SQDT…APVF), 3441–3545 (SRGN…PPAI), and 3546–3647 (LPLE…AIRF). 3 N-linked (GlcNAc...) asparagine glycosylation sites follow: N660, N740, and N791. N-linked (GlcNAc...) asparagine glycosylation is present at N998. N-linked (GlcNAc...) asparagine glycosylation is found at N1426 and N1551. N1748, N1864, N1902, N1940, and N1991 each carry an N-linked (GlcNAc...) asparagine glycan. 2 N-linked (GlcNAc...) asparagine glycosylation sites follow: N2325 and N2464. N-linked (GlcNAc...) asparagine glycosylation is found at N3324, N3422, N3444, N3613, N3640, and N3716. The EGF-like 1 domain maps to 3790–3827 (VHHGCEDDPCPEGSECVSDPWEEKHTCVCPSGRFGQCP). Intrachain disulfides connect C3794–C3805, C3799–C3816, C3818–C3826, C3976–C4009, C4017–C4028, C4022–C4038, C4040–C4049, C4056–C4067, C4061–C4076, C4078–C4087, C4093–C4104, C4098–C4113, C4115–C4124, C4131–C4142, and C4136–C4151. Residues 3829–4009 (SSSMTLTGNS…EESVDVSPGC (181 aa)) form the Laminin G-like domain. EGF-like domains lie at 4013-4050 (ATED…THCE), 4052-4088 (SVNP…QRCQ), and 4089-4125 (LSPY…ERCQ). The EGF-like 5; calcium-binding domain occupies 4127–4163 (DIDECSGNPCLHGALCENTHGSYHCNCSHEYRGRHCE). N-linked (GlcNAc...) asparagine glycosylation occurs at N4152. C4153 and C4162 are oxidised to a cystine. A helical transmembrane segment spans residues 4182 to 4202 (GIGIVVFVAGIFLLVVVFVLC). Residues 4203–4588 (RKMISRKKKH…PLDSQQHTEV (386 aa)) lie on the Cytoplasmic side of the membrane. Residues 4204–4214 (KMISRKKKHQA) carry the Nuclear localization signal motif. Disordered stretches follow at residues 4255 to 4275 (SYTP…SFEG), 4303 to 4327 (SVAP…QKPS), and 4343 to 4376 (LSKK…SESC). Over residues 4256–4265 (YTPSIPSDSR) the composition is skewed to polar residues. Polar residues predominate over residues 4363–4374 (SEVQSLSSFQSE). Positions 4378–4382 (DNGYH) match the PTB-like motif motif. Disordered regions lie at residues 4435-4479 (FPPP…SSSR) and 4565-4588 (ESGD…HTEV).

As to quaternary structure, interacts (via the C-terminus 4300-4400 AA) with ATN1. Interacts with RERE. Undergoes proteolytic cleavage. The extracellular domain is cleaved off and the cytoplasmic domain (about 400 AA) shuttles to the nucleus. As to expression, expressed in many epithelial and some endothelial and smooth muscle cells.

The protein resides in the cell membrane. Its subcellular location is the nucleus. Functionally, plays an essential role for cellular polarization, directed cell migration and modulating cell-cell contact. In Homo sapiens (Human), this protein is Protocadherin Fat 1 (FAT1).